Consider the following 275-residue polypeptide: Shikimate dehydrogenase (NADP(+)) (275 aa).

Shikimate contacts are provided by residues 19–21 (SIS) and Thr66. Catalysis depends on Lys70, which acts as the Proton acceptor. Residues Asn91 and Asp106 each coordinate shikimate. Residues 129-133 (GAGGA), 153-158 (NRTYGR), and Ile219 contribute to the NADP(+) site. Shikimate is bound at residue Tyr221. Gly242 contacts NADP(+).

Belongs to the shikimate dehydrogenase family. Homodimer.

The enzyme catalyses shikimate + NADP(+) = 3-dehydroshikimate + NADPH + H(+). It participates in metabolic intermediate biosynthesis; chorismate biosynthesis; chorismate from D-erythrose 4-phosphate and phosphoenolpyruvate: step 4/7. Its function is as follows. Involved in the biosynthesis of the chorismate, which leads to the biosynthesis of aromatic amino acids. Catalyzes the reversible NADPH linked reduction of 3-dehydroshikimate (DHSA) to yield shikimate (SA). This chain is Shikimate dehydrogenase (NADP(+)), found in Dictyoglomus thermophilum (strain ATCC 35947 / DSM 3960 / H-6-12).